A 228-amino-acid polypeptide reads, in one-letter code: Cytochrome c oxidase subunit 2 (228 aa).

Residues 1 to 26 (MATWANLGLQDSSSPLMEQLNFFHDH) lie on the Mitochondrial intermembrane side of the membrane. The chain crosses the membrane as a helical span at residues 27–47 (TLLILTMITILVGYIMGMLMF). The Mitochondrial matrix portion of the chain corresponds to 48–60 (NQFTNRYLLHGQT). Residues 61–81 (IEIIWTVLPAIILMFIALPSL) traverse the membrane as a helical segment. The Mitochondrial intermembrane portion of the chain corresponds to 82-228 (RLLYLMDEIN…FIKWITNMTN (147 aa)). Residues H161, C196, E198, C200, H204, and M207 each coordinate Cu cation. E198 provides a ligand contact to Mg(2+).

The protein belongs to the cytochrome c oxidase subunit 2 family. As to quaternary structure, component of the cytochrome c oxidase (complex IV, CIV), a multisubunit enzyme composed of a catalytic core of 3 subunits and several supernumerary subunits. The complex exists as a monomer or a dimer and forms supercomplexes (SCs) in the inner mitochondrial membrane with ubiquinol-cytochrome c oxidoreductase (cytochrome b-c1 complex, complex III, CIII). Requires Cu cation as cofactor.

It is found in the mitochondrion inner membrane. The enzyme catalyses 4 Fe(II)-[cytochrome c] + O2 + 8 H(+)(in) = 4 Fe(III)-[cytochrome c] + 2 H2O + 4 H(+)(out). Component of the cytochrome c oxidase, the last enzyme in the mitochondrial electron transport chain which drives oxidative phosphorylation. The respiratory chain contains 3 multisubunit complexes succinate dehydrogenase (complex II, CII), ubiquinol-cytochrome c oxidoreductase (cytochrome b-c1 complex, complex III, CIII) and cytochrome c oxidase (complex IV, CIV), that cooperate to transfer electrons derived from NADH and succinate to molecular oxygen, creating an electrochemical gradient over the inner membrane that drives transmembrane transport and the ATP synthase. Cytochrome c oxidase is the component of the respiratory chain that catalyzes the reduction of oxygen to water. Electrons originating from reduced cytochrome c in the intermembrane space (IMS) are transferred via the dinuclear copper A center (CU(A)) of subunit 2 and heme A of subunit 1 to the active site in subunit 1, a binuclear center (BNC) formed by heme A3 and copper B (CU(B)). The BNC reduces molecular oxygen to 2 water molecules using 4 electrons from cytochrome c in the IMS and 4 protons from the mitochondrial matrix. The chain is Cytochrome c oxidase subunit 2 (COXII) from Anopheles quadrimaculatus (Common malaria mosquito).